Here is an 850-residue protein sequence, read N- to C-terminus: Rho guanine nucleotide exchange factor 33 (850 aa).

Basic and acidic residues-rich tracts occupy residues 1–13 (MEKS…ENEH) and 98–113 (EEMQ…EKRR). Disordered regions lie at residues 1 to 21 (MEKS…NPST) and 98 to 209 (EEMQ…DENL). Residues 54–128 (LEEKVKSCRC…KAKKAQKEEH (75 aa)) are a coiled coil. The segment covering 130–149 (AQAGPASAPAPGSAPTQGSP) has biased composition (low complexity). A compositionally biased stretch (polar residues) spans 164–175 (DFTNMLPSQNYE). Residues 273–448 (KRQTVALELL…RVFISHYTLL (176 aa)) enclose the DH domain. Disordered stretches follow at residues 504–550 (EMLQ…WELE) and 702–850 (AAQA…WGWW). 2 stretches are compositionally biased toward low complexity: residues 510 to 520 (PSSSSSAPAVS) and 754 to 770 (APHG…GAPR). Arg766 carries the omega-N-methylarginine modification. Over residues 773 to 783 (FPQQRSQSEKQ) the composition is skewed to polar residues. The segment covering 784-806 (TYLEEMHLEDATRFCPKEERESE) has biased composition (basic and acidic residues). Over residues 826–835 (SFRKLFKKKN) the composition is skewed to basic residues.

This chain is Rho guanine nucleotide exchange factor 33 (Arhgef33), found in Mus musculus (Mouse).